The chain runs to 163 residues: Single-stranded DNA-binding protein 2 (163 aa).

The 104-residue stretch at 1–104 (MINNVVLVGR…VVADNFQMLE (104 aa)) folds into the SSB domain. A disordered region spans residues 109-163 (REGGSTGSFNGGFNNNTSSSNSYSAPAQQTPNFGRDDSPFGNSNPMDISDDDLPF). Low complexity predominate over residues 119-130 (GGFNNNTSSSNS). The span at 131-140 (YSAPAQQTPN) shows a compositional bias: polar residues. Positions 158 to 163 (DDDLPF) match the Important for interaction with partner proteins motif.

Homotetramer.

In terms of biological role, plays an important role in DNA replication, recombination and repair. Binds to ssDNA and to an array of partner proteins to recruit them to their sites of action during DNA metabolism. This Streptococcus pyogenes serotype M6 (strain ATCC BAA-946 / MGAS10394) protein is Single-stranded DNA-binding protein 2 (ssb2).